Reading from the N-terminus, the 211-residue chain is Small ribosomal subunit protein uS3 (211 aa).

Positions 16-85 (IDEYFKTKLV…NPQIEVKQVE (70 aa)) constitute a KH type-2 domain.

Belongs to the universal ribosomal protein uS3 family. As to quaternary structure, part of the 30S ribosomal subunit.

In terms of biological role, binds the lower part of the 30S subunit head. The chain is Small ribosomal subunit protein uS3 from Methanococcus maripaludis (strain C7 / ATCC BAA-1331).